Consider the following 163-residue polypeptide: Phosphopantetheine adenylyltransferase (163 aa).

Ser-11 is a binding site for substrate. ATP contacts are provided by residues 11-12 (SF) and His-19. Lys-43, Leu-75, and Arg-89 together coordinate substrate. ATP is bound by residues 90–92 (GLR), Glu-100, and 125–131 (FGYLSSS).

It belongs to the bacterial CoaD family. In terms of assembly, homohexamer. Mg(2+) serves as cofactor.

The protein resides in the cytoplasm. It carries out the reaction (R)-4'-phosphopantetheine + ATP + H(+) = 3'-dephospho-CoA + diphosphate. It functions in the pathway cofactor biosynthesis; coenzyme A biosynthesis; CoA from (R)-pantothenate: step 4/5. Reversibly transfers an adenylyl group from ATP to 4'-phosphopantetheine, yielding dephospho-CoA (dPCoA) and pyrophosphate. The polypeptide is Phosphopantetheine adenylyltransferase (Geobacter metallireducens (strain ATCC 53774 / DSM 7210 / GS-15)).